A 376-amino-acid polypeptide reads, in one-letter code: ATP phosphoribosyltransferase regulatory subunit (376 aa).

It belongs to the class-II aminoacyl-tRNA synthetase family. HisZ subfamily. As to quaternary structure, heteromultimer composed of HisG and HisZ subunits.

The protein resides in the cytoplasm. The protein operates within amino-acid biosynthesis; L-histidine biosynthesis; L-histidine from 5-phospho-alpha-D-ribose 1-diphosphate: step 1/9. Required for the first step of histidine biosynthesis. May allow the feedback regulation of ATP phosphoribosyltransferase activity by histidine. The sequence is that of ATP phosphoribosyltransferase regulatory subunit from Brucella ovis (strain ATCC 25840 / 63/290 / NCTC 10512).